A 92-amino-acid polypeptide reads, in one-letter code: Beta-2-microglobulin (92 aa).

Residues 2-91 form the Ig-like C1-type domain; the sequence is PQIQVYTRHP…VSLNEPKTVI (90 aa). A disulfide bridge connects residues cysteine 22 and cysteine 77.

This sequence belongs to the beta-2-microglobulin family. In terms of assembly, heterodimer of an alpha chain and a beta chain. Beta-2-microglobulin is the beta-chain of major histocompatibility complex class I molecules.

The protein localises to the secreted. Functionally, component of the class I major histocompatibility complex (MHC). Involved in the presentation of peptide antigens to the immune system. This is Beta-2-microglobulin (B2m) from Mus cervicolor (Fawn-colored mouse).